The following is a 275-amino-acid chain: 2-C-methyl-D-erythritol 4-phosphate cytidylyltransferase (275 aa).

Belongs to the IspD/TarI cytidylyltransferase family. IspD subfamily.

It catalyses the reaction 2-C-methyl-D-erythritol 4-phosphate + CTP + H(+) = 4-CDP-2-C-methyl-D-erythritol + diphosphate. It functions in the pathway isoprenoid biosynthesis; isopentenyl diphosphate biosynthesis via DXP pathway; isopentenyl diphosphate from 1-deoxy-D-xylulose 5-phosphate: step 2/6. Functionally, catalyzes the formation of 4-diphosphocytidyl-2-C-methyl-D-erythritol from CTP and 2-C-methyl-D-erythritol 4-phosphate (MEP). The polypeptide is 2-C-methyl-D-erythritol 4-phosphate cytidylyltransferase (Corynebacterium jeikeium (strain K411)).